We begin with the raw amino-acid sequence, 958 residues long: Eukaryotic translation initiation factor 3 subunit A (958 aa).

Residues 93–123 are a coiled coil; the sequence is MHLATERAELARNQAQALEEALDVEDLEADK. The PCI domain occupies 316–513; sequence LQLIASSVVL…GLSSLVNRVL (198 aa). Coiled coils occupy residues 548–696 and 796–861; these read EALS…AKRE and LRSE…LRKS. Positions 804 to 859 are enriched in basic and acidic residues; it reads KRLQEEEEARKREEAERRKKEEAERQAKLDEIAEKQRRRMLELEEKEKREREEILR. A disordered region spans residues 804–958; sequence KRLQEEEEAR…SRTSWPASRR (155 aa). Low complexity predominate over residues 877–894; sequence PAELGGAAPIPAAAATAP. Residues 929 to 942 show a composition bias toward basic and acidic residues; it reads KPDDRPSWRDERKP. A compositionally biased stretch (polar residues) spans 946 to 958; the sequence is GSGSRTSWPASRR.

It belongs to the eIF-3 subunit A family. In terms of assembly, component of the eukaryotic translation initiation factor 3 (eIF-3) complex.

It localises to the cytoplasm. In terms of biological role, RNA-binding component of the eukaryotic translation initiation factor 3 (eIF-3) complex, which is involved in protein synthesis of a specialized repertoire of mRNAs and, together with other initiation factors, stimulates binding of mRNA and methionyl-tRNAi to the 40S ribosome. The eIF-3 complex specifically targets and initiates translation of a subset of mRNAs involved in cell proliferation. This is Eukaryotic translation initiation factor 3 subunit A (TIF3A1) from Nicotiana tabacum (Common tobacco).